A 43-amino-acid polypeptide reads, in one-letter code: uncharacterized protein (43 aa).

Over residues 1-37 (MIIKNNNNNNNNNNNNNNNNNNNNNNNNNNNNNNNNN) the composition is skewed to low complexity. The tract at residues 1-43 (MIIKNNNNNNNNNNNNNNNNNNNNNNNNNNNNNNNNNIEIIIK) is disordered.

This is an uncharacterized protein from Dictyostelium discoideum (Social amoeba).